The sequence spans 88 residues: Large ribosomal subunit protein bL27 (88 aa).

The segment at 1–23 (MAHKKGTGSTRNGRDSNAQRLGV) is disordered. Residues 7–19 (TGSTRNGRDSNAQ) are compositionally biased toward polar residues.

It belongs to the bacterial ribosomal protein bL27 family.

This Synechococcus elongatus (strain ATCC 33912 / PCC 7942 / FACHB-805) (Anacystis nidulans R2) protein is Large ribosomal subunit protein bL27 (rpmA).